The sequence spans 730 residues: Hepatocyte growth factor (730 aa).

An N-terminal signal peptide occupies residues 1–31 (MWVTRLLPVLLLQHVLLHLLLLPIAIPYAEG). Q32 bears the Pyrrolidone carboxylic acid mark. One can recognise a PAN domain in the interval 37 to 123 (NTLHEFKRSA…HEFDLYENKD (87 aa)). Intrachain disulfides connect C70-C96, C74-C84, C128-C206, C149-C189, C177-C201, C211-C288, C232-C271, and C260-C283. Kringle domains are found at residues 128–206 (CIIG…IPQC) and 211–288 (CMTC…IKMC). N294 carries N-linked (GlcNAc...) asparagine glycosylation. 11 cysteine pairs are disulfide-bonded: C305–C383, C326–C365, C354–C377, C391–C469, C412–C452, C440–C464, C487–C606, C519–C535, C614–C681, C644–C660, and C671–C699. Kringle domains are found at residues 305 to 383 (CIQG…IPKC) and 391 to 469 (CYRG…ISRC). The Peptidase S1 domain occupies 495–723 (VVNGIPTRTN…YAKWIHKIIL (229 aa)). 2 N-linked (GlcNAc...) asparagine glycosylation sites follow: N568 and N655.

It belongs to the peptidase S1 family. Plasminogen subfamily. As to quaternary structure, dimer of an alpha chain and a beta chain linked by a disulfide bond. Interacts with SRPX2; the interaction increases HGF mitogenic activity. Post-translationally, the single-chain precursor undergoes proteolytic processing by TMPRSS13 resulting in an active two-chain form. The single-chain precursor undergoes proteolytic processing by HGFAC resulting in an active two-chain form.

Functionally, potent mitogen for mature parenchymal hepatocyte cells, seems to be a hepatotrophic factor, and acts as a growth factor for a broad spectrum of tissues and cell types. Activating ligand for the receptor tyrosine kinase MET by binding to it and promoting its dimerization. Activates MAPK signaling following TMPRSS13 cleavage and activation. The sequence is that of Hepatocyte growth factor (HGF) from Bos taurus (Bovine).